Reading from the N-terminus, the 215-residue chain is Phosphoenolpyruvate guanylyltransferase (215 aa).

T144, G159, and S162 together coordinate phosphoenolpyruvate.

Belongs to the CofC family.

It catalyses the reaction phosphoenolpyruvate + GTP + H(+) = enolpyruvoyl-2-diphospho-5'-guanosine + diphosphate. Its pathway is cofactor biosynthesis; coenzyme F420 biosynthesis. Its function is as follows. Guanylyltransferase that catalyzes the activation of phosphoenolpyruvate (PEP) as enolpyruvoyl-2-diphospho-5'-guanosine, via the condensation of PEP with GTP. It is involved in the biosynthesis of coenzyme F420, a hydride carrier cofactor. This is Phosphoenolpyruvate guanylyltransferase from Geodermatophilus obscurus (strain ATCC 25078 / DSM 43160 / JCM 3152 / CCUG 61914 / KCC A-0152 / KCTC 9177 / NBRC 13315 / NRRL B-3577 / G-20).